Here is a 273-residue protein sequence, read N- to C-terminus: Galactose-binding lectin (273 aa).

The N-terminal stretch at 1 to 23 (MKPFCVFLTFFLLLAASSKKVDS) is a signal peptide. Mn(2+) contacts are provided by E144 and D146. Residues D146, Y148, N150, and D155 each contribute to the Ca(2+) site. Mn(2+) contacts are provided by D155 and H160.

This sequence belongs to the leguminous lectin family. As to quaternary structure, homotetramer.

In terms of biological role, D-galactose specific lectin. The protein is Galactose-binding lectin of Arachis hypogaea (Peanut).